Here is an 827-residue protein sequence, read N- to C-terminus: 6-phosphofructo-2-kinase 1 (827 aa).

2 disordered regions span residues 1–97 (MFKP…ENSA) and 149–175 (TRHHKRRPTTIDVPGLTKSKTSPDGLI). Positions 31–41 (SQDSSYDLLSR) are enriched in low complexity. A compositionally biased stretch (basic and acidic residues) spans 42–59 (SSDDKIDAEKGPHDELSK). Positions 72–97 (TPISSNWNSPGITEENTPSDSPENSA) are enriched in polar residues. Serine 92 carries the phosphoserine modification. Threonine 157 bears the Phosphothreonine mark. Position 190–197 (190–197 (GLPATGKS)) interacts with ATP. Residues aspartate 277 and cysteine 309 contribute to the active site. Residue arginine 343 participates in beta-D-fructose 6-phosphate binding. Serine 404 serves as the catalytic Phosphoserine intermediate. Glutamate 497 is a catalytic residue. Histidine 565 (proton donor) is an active-site residue. Residues serine 644, serine 652, serine 659, and serine 667 each carry the phosphoserine modification. Disordered regions lie at residues 649–704 (APPS…SNFN) and 799–827 (HGKDYPNNADNNDNEDIRAKTMNRSQSHV). Over residues 671–682 (SASSSQSELSEQ) the composition is skewed to low complexity. Residues 683 to 704 (PKNSVSAQTGSNNTTLIGSNFN) show a composition bias toward polar residues.

It carries out the reaction beta-D-fructose 6-phosphate + ATP = beta-D-fructose 2,6-bisphosphate + ADP + H(+). With respect to regulation, phosphorylation results in the activation of the kinase activity. Its function is as follows. Synthesis of fructose 2,6-bisphosphate. The chain is 6-phosphofructo-2-kinase 1 (PFK26) from Saccharomyces cerevisiae (strain ATCC 204508 / S288c) (Baker's yeast).